A 194-amino-acid polypeptide reads, in one-letter code: Anthranilate synthase component 2 (194 aa).

Positions 2–194 (KIFFIDNFDS…QSVGFLEGLL (193 aa)) constitute a Glutamine amidotransferase type-1 domain. 57–59 (GPG) provides a ligand contact to L-glutamine. Cys-84 (nucleophile; for GATase activity) is an active-site residue. Residues Gln-88 and 134 to 135 (SL) contribute to the L-glutamine site. Residues His-170 and Glu-172 each act as for GATase activity in the active site.

Heterotetramer consisting of two non-identical subunits: a beta subunit (TrpG) and a large alpha subunit (TrpE).

The catalysed reaction is chorismate + L-glutamine = anthranilate + pyruvate + L-glutamate + H(+). It participates in amino-acid biosynthesis; L-tryptophan biosynthesis; L-tryptophan from chorismate: step 1/5. In terms of biological role, part of a heterotetrameric complex that catalyzes the two-step biosynthesis of anthranilate, an intermediate in the biosynthesis of L-tryptophan. In the first step, the glutamine-binding beta subunit (TrpG) of anthranilate synthase (AS) provides the glutamine amidotransferase activity which generates ammonia as a substrate that, along with chorismate, is used in the second step, catalyzed by the large alpha subunit of AS (TrpE) to produce anthranilate. In the absence of TrpG, TrpE can synthesize anthranilate directly from chorismate and high concentrations of ammonia. The chain is Anthranilate synthase component 2 (trpG) from Helicobacter pylori (strain ATCC 700392 / 26695) (Campylobacter pylori).